A 268-amino-acid chain; its full sequence is Small ribosomal subunit protein eS1 (268 aa).

Disordered stretches follow at residues 1 to 21 and 238 to 268; these read MAVG…KKKV and GGGK…QEAV.

Belongs to the eukaryotic ribosomal protein eS1 family. In terms of assembly, component of the small ribosomal subunit. Mature ribosomes consist of a small (40S) and a large (60S) subunit. The 40S subunit contains about 33 different proteins and 1 molecule of RNA (18S). The 60S subunit contains about 49 different proteins and 3 molecules of RNA (28S, 5.8S and 5S).

It is found in the cytoplasm. Functionally, essential for oogenesis; required for late follicle cell development. This is Small ribosomal subunit protein eS1 from Drosophila ananassae (Fruit fly).